A 101-amino-acid chain; its full sequence is Feather keratin Cos1-1/Cos1-3/Cos2-1 (101 aa).

The residue at position 2 (Ser-2) is an N-acetylserine.

It belongs to the avian keratin family. The avian keratins (F-ker, S-ker, C-ker and B-ker) are a complex mixture of very similar polypeptides.

This chain is Feather keratin Cos1-1/Cos1-3/Cos2-1, found in Columba livia (Rock dove).